An 84-amino-acid chain; its full sequence is RNA-binding protein Hfq (84 aa).

A Sm domain is found at 9 to 68 (DPYLNTLRKERVPVSIYLVNGIKLQGQIESFDQFVILLKNTVSQMVYKHAISTVVPGRPV).

This sequence belongs to the Hfq family. In terms of assembly, homohexamer.

RNA chaperone that binds small regulatory RNA (sRNAs) and mRNAs to facilitate mRNA translational regulation in response to envelope stress, environmental stress and changes in metabolite concentrations. Also binds with high specificity to tRNAs. This chain is RNA-binding protein Hfq, found in Stutzerimonas stutzeri (strain A1501) (Pseudomonas stutzeri).